A 588-amino-acid chain; its full sequence is Aspartate--tRNA ligase (588 aa).

An L-aspartate-binding site is contributed by Glu172. The interval 196–199 (QLFK) is aspartate. Arg218 serves as a coordination point for L-aspartate. ATP-binding positions include 218 to 220 (RDE) and Gln227. His449 provides a ligand contact to L-aspartate. Glu483 provides a ligand contact to ATP. Arg490 contacts L-aspartate. Residue 535 to 538 (GLDR) coordinates ATP.

It belongs to the class-II aminoacyl-tRNA synthetase family. Type 1 subfamily. Homodimer.

Its subcellular location is the cytoplasm. The catalysed reaction is tRNA(Asp) + L-aspartate + ATP = L-aspartyl-tRNA(Asp) + AMP + diphosphate. Catalyzes the attachment of L-aspartate to tRNA(Asp) in a two-step reaction: L-aspartate is first activated by ATP to form Asp-AMP and then transferred to the acceptor end of tRNA(Asp). This is Aspartate--tRNA ligase from Haemophilus influenzae (strain 86-028NP).